Here is a 144-residue protein sequence, read N- to C-terminus: Large ribosomal subunit protein uL11m (144 aa).

A mitochondrion-targeting transit peptide spans 1–32 (MASTRTTIIKLIVPAGKATPTPPIGPALGARG).

The protein belongs to the universal ribosomal protein uL11 family. Component of the mitochondrial large ribosomal subunit (mt-LSU). Mature yeast 74S mitochondrial ribosomes consist of a small (37S) and a large (54S) subunit. The 37S small subunit contains a 15S ribosomal RNA (15S mt-rRNA) and at least 32 different proteins. The 54S large subunit contains a 21S rRNA (21S mt-rRNA) and at least 45 different proteins.

It localises to the mitochondrion. It is found in the cytoplasm. Functionally, component of the mitochondrial ribosome (mitoribosome), a dedicated translation machinery responsible for the synthesis of mitochondrial genome-encoded proteins, including at least some of the essential transmembrane subunits of the mitochondrial respiratory chain. The mitoribosomes are attached to the mitochondrial inner membrane and translation products are cotranslationally integrated into the membrane. The protein is Large ribosomal subunit protein uL11m of Schizosaccharomyces pombe (strain 972 / ATCC 24843) (Fission yeast).